Here is a 376-residue protein sequence, read N- to C-terminus: Mannosyl phosphorylinositol ceramide synthase CSH1 (376 aa).

2 helical membrane-spanning segments follow: residues 7-27 (ILII…FDLL) and 274-294 (ILSC…GEFT). The tract at residues 331–351 (NKEKRRNPTRHEYNSRGKRLR) is disordered. Phosphoserine is present on S354.

It belongs to the glycosyltransferase 32 family. As to quaternary structure, heterodimer of CSH1 and CSG2.

It is found in the vacuole membrane. The catalysed reaction is a 1D-myo-inositol-1-phospho-N-[(R)-2-hydroxy-very-long-chain fatty acyl]-(R)-4-hydroxysphingoid base + GDP-alpha-D-mannose = an alpha-D-mannosyl-(1&lt;-&gt;6)-1D-myo-inositol-1-phospho-N-[(R)-2-hydroxy-very-long-chain fatty acyl]-(R)-4-hydroxysphingoid base + GDP + H(+). Its function is as follows. Involved in the synthesis of mannosyl phosphorylinositol ceramide. Catalyzes the addition of mannosyl to phosphorylinositol ceramide. In Saccharomyces cerevisiae (strain ATCC 204508 / S288c) (Baker's yeast), this protein is Mannosyl phosphorylinositol ceramide synthase CSH1.